The primary structure comprises 73 residues: Conotoxin Lt9a (73 aa).

Positions 1 to 23 are cleaved as a signal peptide; the sequence is MTLTKSAVLILVLLLAFDNFADV. Residues 24–40 constitute a propeptide that is removed on maturation; that stretch reads QPGLITMGGGRLSNLLS. Disulfide bonds link C48/C62, C53/C64, and C59/C69.

It belongs to the conotoxin P superfamily. Expressed by the venom duct.

Its subcellular location is the secreted. Probable neurotoxin that inhibits ion channels. The protein is Conotoxin Lt9a of Conus litteratus (Lettered cone).